A 129-amino-acid polypeptide reads, in one-letter code: Small ribosomal subunit protein uS8 (129 aa).

Belongs to the universal ribosomal protein uS8 family. In terms of assembly, part of the 30S ribosomal subunit. Contacts proteins S5 and S12.

Functionally, one of the primary rRNA binding proteins, it binds directly to 16S rRNA central domain where it helps coordinate assembly of the platform of the 30S subunit. In Mycoplasma capricolum subsp. capricolum (strain California kid / ATCC 27343 / NCTC 10154), this protein is Small ribosomal subunit protein uS8.